A 421-amino-acid polypeptide reads, in one-letter code: MKVTILGAGVIGVTSAYYLAKAGHEVTVIDRQTGPALETSFANAGEVSFGYCSPWAAPGIPQKALKWLFMEHAPLILRPKIDAAMLGWMLRMLSNCTSGRYAINKSRMLRLADYSRIALAQLRTETNIDYDQRMQGTLQLFRTQAQLDASAKDVKALAADGIPYEVLDREACIRVEPALAAARHKIVGGLLTPKDETGDCFKFTNQLAEKAASLGVVFDYGRSIERLVVSGGKVTGVVTDRGTETADAYVVALGSYSPLLLKPLGITLPVYPVKGYSLTIPIVDPSKSPESTVMDETYKIAITRLGDRIRVGGMAEISGYTNDLGAARRRTLEHSVTDLFPGGDMGRADFWSGLRPMTPDGTPVIGATGISNLYINSGHGTLGWTMSCGSGRLLSDIVSGRQTEIDNADLALSRYAAGRVG.

3-17 (VTILGAGVIGVTSAY) contacts FAD.

Belongs to the DadA oxidoreductase family. FAD serves as cofactor.

The enzyme catalyses a D-alpha-amino acid + A + H2O = a 2-oxocarboxylate + AH2 + NH4(+). Its pathway is amino-acid degradation; D-alanine degradation; NH(3) and pyruvate from D-alanine: step 1/1. Functionally, oxidative deamination of D-amino acids. The polypeptide is D-amino acid dehydrogenase (Allorhizobium ampelinum (strain ATCC BAA-846 / DSM 112012 / S4) (Agrobacterium vitis (strain S4))).